The following is a 255-amino-acid chain: Accessory gland-specific peptide 26Aa (255 aa).

A signal peptide spans 1–18 (MNQILLCSQILLLLFAVA). Residues 86-110 (PINNSKSRKNSSTLPSQILTDKPNQ) form a disordered region. The segment covering 87 to 110 (INNSKSRKNSSTLPSQILTDKPNQ) has biased composition (polar residues). N-linked (GlcNAc...) asparagine glycans are attached at residues Asn88, Asn95, and Asn136. Disordered regions lie at residues 177 to 197 (NAQN…KDIA) and 235 to 255 (NNPA…PSTT). Residues 183-192 (KPTKSCKKRP) show a composition bias toward basic residues. Residues 245 to 255 (KSPSEGNPSTT) show a composition bias toward polar residues.

It undergoes several cleavages as it is secreted and it is further processed in the recipient female. As to expression, main cells of the accessory glands of males.

It is found in the secreted. The protein resides in the extracellular space. Functionally, this protein is transferred from male to female's hemolymph during mating, affecting egglaying and behavior after mating. This chain is Accessory gland-specific peptide 26Aa (Acp26Aa), found in Drosophila simulans (Fruit fly).